The primary structure comprises 494 residues: Monocarboxylate transporter 1 (494 aa).

Topologically, residues 1–22 are cytoplasmic; the sequence is MPPAIGGPVGYTPPDGGWGWAV. Residues 23–44 form a helical membrane-spanning segment; it reads VVGAFISIGFSYAFPKSITVFF. Lys38 provides a ligand contact to (S)-lactate. The Extracellular portion of the chain corresponds to 45 to 55; that stretch reads KEIEIIFSATT. A helical membrane pass occupies residues 56-80; sequence SEVSWISSIMLAVMYAGGPISSILV. Residues 81 to 84 are Cytoplasmic-facing; it reads NKYG. A helical transmembrane segment spans residues 85-105; the sequence is SRPVMIAGGCLSGCGLIAASF. Residues 106–109 lie on the Extracellular side of the membrane; sequence CNTV. A helical transmembrane segment spans residues 110–132; the sequence is QELYFCIGVIGGLGLAFNLNPAL. Residues 133 to 146 lie on the Cytoplasmic side of the membrane; the sequence is TMIGKYFYKKRPLA. Residues 147–169 traverse the membrane as a helical segment; that stretch reads NGLAMAGSPVFLSTLAPLNQAFF. The Extracellular portion of the chain corresponds to 170–174; it reads GIFGW. A helical membrane pass occupies residues 175-194; the sequence is RGSFLILGGLLLNCCVAGSL. At 195 to 254 the chain is on the cytoplasmic side; that stretch reads MRPIGPQQGKVEKLKSKESLQEAGKSDANTDLIGGSPKGEKLSVFQTVNKFLDLSLFTHR. A phosphoserine mark is found at Ser210, Ser213, and Ser220. Position 224 is a phosphothreonine (Thr224). Position 230 is a phosphoserine (Ser230). A helical membrane pass occupies residues 255–281; that stretch reads GFLLYLSGNVVMFFGLFTPLVFLSNYG. At 282 to 288 the chain is on the extracellular side; that stretch reads KSKHFSS. A helical membrane pass occupies residues 289–310; the sequence is EKSAFLLSILAFVDMVARPSMG. Asp302 is a binding site for H(+). Arg306 contributes to the (S)-lactate binding site. The Cytoplasmic segment spans residues 311–321; that stretch reads LAANTRWIRPR. A helical membrane pass occupies residues 322–342; sequence VQYFFAASVVANGVCHLLAPL. Over 343 to 346 the chain is Extracellular; the sequence is STTY. Residues 347-368 traverse the membrane as a helical segment; the sequence is VGFCIYAGVFGFAFGWLSSVLF. The Cytoplasmic segment spans residues 369–382; the sequence is ETLMDLVGPQRFSS. Residues 383–403 form a helical membrane-spanning segment; the sequence is AVGLVTIVECCPVLLGPPLLG. The Extracellular segment spans residues 404-414; it reads RLNDMYGDYKY. Residues 415 to 436 form a helical membrane-spanning segment; sequence TYWACGVILIIAGLYLFIGMGI. At 437–494 the chain is on the cytoplasmic side; it reads NYRLVAKEQKAEEKKRDGKEDETSTDVDEKPKKTMKETQSPAPLQNSSGDPAEEESPV. The segment covering 446-472 has biased composition (basic and acidic residues); that stretch reads KAEEKKRDGKEDETSTDVDEKPKKTMK. The segment at 446–494 is disordered; that stretch reads KAEEKKRDGKEDETSTDVDEKPKKTMKETQSPAPLQNSSGDPAEEESPV. At Thr459 the chain carries Phosphothreonine. Phosphoserine is present on Ser460. Phosphothreonine is present on Thr461. Over residues 473–485 the composition is skewed to polar residues; the sequence is ETQSPAPLQNSSG. 4 positions are modified to phosphoserine: Ser476, Ser483, Ser484, and Ser492.

Belongs to the major facilitator superfamily. Monocarboxylate porter (TC 2.A.1.13) family. Interacts with BSG. Interacts with EMB. Interaction with either BSG or EMB is required for expression at the cell membrane. In terms of tissue distribution, detected in erythrocytes (at protein level). Detected in brain, heart, kidney, lung, muscle, jejunum enterocytes and brain capillaries.

The protein localises to the cell membrane. It is found in the basolateral cell membrane. The protein resides in the apical cell membrane. It catalyses the reaction (S)-lactate(in) + H(+)(in) = (S)-lactate(out) + H(+)(out). It carries out the reaction pyruvate(out) + H(+)(out) = pyruvate(in) + H(+)(in). The enzyme catalyses acetoacetate(out) + H(+)(out) = acetoacetate(in) + H(+)(in). The catalysed reaction is (S)-3-hydroxybutanoate(out) + H(+)(out) = (S)-3-hydroxybutanoate(in) + H(+)(in). It catalyses the reaction (R)-3-hydroxybutanoate(out) + H(+)(out) = (R)-3-hydroxybutanoate(in) + H(+)(in). It carries out the reaction 3-methyl-2-oxobutanoate(out) + H(+)(out) = 3-methyl-2-oxobutanoate(in) + H(+)(in). The enzyme catalyses 4-methyl-2-oxopentanoate(out) + H(+)(out) = 4-methyl-2-oxopentanoate(in) + H(+)(in). Its activity is regulated as follows. Inhibited by stilbene disulfonates, such as di-isothiocyanostilbene disulfonate(DIDS), a cross-linking reagent that forms covalent linkages with lysine groups. Functionally, bidirectional proton-coupled monocarboxylate transporter. Catalyzes the rapid transport across the plasma membrane of many monocarboxylates such as lactate, pyruvate, acetate and the ketone bodies acetoacetate and beta-hydroxybutyrate, and thus contributes to the maintenance of intracellular pH. The transport direction is determined by the proton motive force and the concentration gradient of the substrate monocarboxylate. MCT1 is a major lactate exporter. Plays a role in cellular responses to a high-fat diet by modulating the cellular levels of lactate and pyruvate that contribute to the regulation of central metabolic pathways and insulin secretion, with concomitant effects on plasma insulin levels and blood glucose homeostasis. Facilitates the protonated monocarboxylate form of succinate export, that its transient protonation upon muscle cell acidification in exercising muscle and ischemic heart. Functions via alternate outward- and inward-open conformation states. Protonation and deprotonation of 302-Asp is essential for the conformational transition. This Rattus norvegicus (Rat) protein is Monocarboxylate transporter 1 (Slc16a1).